Here is a 479-residue protein sequence, read N- to C-terminus: Aspartyl/glutamyl-tRNA(Asn/Gln) amidotransferase subunit B (479 aa).

The protein belongs to the GatB/GatE family. GatB subfamily. Heterotrimer of A, B and C subunits.

It carries out the reaction L-glutamyl-tRNA(Gln) + L-glutamine + ATP + H2O = L-glutaminyl-tRNA(Gln) + L-glutamate + ADP + phosphate + H(+). The enzyme catalyses L-aspartyl-tRNA(Asn) + L-glutamine + ATP + H2O = L-asparaginyl-tRNA(Asn) + L-glutamate + ADP + phosphate + 2 H(+). Functionally, allows the formation of correctly charged Asn-tRNA(Asn) or Gln-tRNA(Gln) through the transamidation of misacylated Asp-tRNA(Asn) or Glu-tRNA(Gln) in organisms which lack either or both of asparaginyl-tRNA or glutaminyl-tRNA synthetases. The reaction takes place in the presence of glutamine and ATP through an activated phospho-Asp-tRNA(Asn) or phospho-Glu-tRNA(Gln). This chain is Aspartyl/glutamyl-tRNA(Asn/Gln) amidotransferase subunit B, found in Streptococcus mutans serotype c (strain ATCC 700610 / UA159).